Reading from the N-terminus, the 318-residue chain is Taste receptor type 2 member 60 (318 aa).

Residues 1–7 (MNGDHMV) are Extracellular-facing. Residues 8–28 (LGSSVTDKKAIILVTILLLLR) form a helical membrane-spanning segment. Over 29–40 (LVAIAGNGFIIA) the chain is Cytoplasmic. Residues 41–61 (ALGVEWVLRRMLLPCDXLLVS) traverse the membrane as a helical segment. Over 62–88 (LGASRFCLQSVVMGKTIYVFLHPMAFP) the chain is Extracellular. The helical transmembrane segment at 89 to 109 (YNPVLQFLAFQWDFLNAATLW) threads the bilayer. Topologically, residues 110 to 128 (FSTWLSVFYCVKIAAFTHP) are cytoplasmic. The chain crosses the membrane as a helical span at residues 129–149 (VFLWLKHKLSGWLPWILFSSV). Residues 150-183 (GLSSFTTILFFIGNHRMYQNYLRNHLQPWNITGN) are Extracellular-facing. The N-linked (GlcNAc...) asparagine glycan is linked to Asn179. Residues 184–204 (SIRSYCEKFYLFPLKMITWTM) form a helical membrane-spanning segment. Topologically, residues 205–234 (PTAVFFICMILLITSLGRHMKKALLTTSGF) are cytoplasmic. Residues 235–255 (REPSMQAHIKALLALLSFAML) traverse the membrane as a helical segment. At 256-264 (FISYFLSLV) the chain is on the extracellular side. A helical transmembrane segment spans residues 265–285 (FSAAGIFPPLDFKFWVWESVI). Residues 286–318 (YLCAAVHPIILLFSNCRLRAVLKSCRSSRCGTP) are Cytoplasmic-facing.

Belongs to the G-protein coupled receptor T2R family.

The protein resides in the membrane. Its function is as follows. Receptor that may play a role in the perception of bitterness and is gustducin-linked. May play a role in sensing the chemical composition of the gastrointestinal content. The activity of this receptor may stimulate alpha gustducin, mediate PLC-beta-2 activation and lead to the gating of TRPM5. The polypeptide is Taste receptor type 2 member 60 (TAS2R60) (Gorilla gorilla gorilla (Western lowland gorilla)).